The chain runs to 492 residues: MDPSKYRPSSSFNTPFCTTNSGAPVWNNTCALTVGSRGPILLEDYHLVEKIQNFTRERIPERVVHARGASAKGFFEVTHDITHLTCADFLRAPGVQTPLIVRFSTVIHERGSPETIRDPRGFAVKMYTRGGNWDLVGNNFPVFFIRDGTQFPDVIHAFKPNPKSHIQENWRILDYLSHLPESLNTFAWFYDDVGIPTDYRHMEGFGVHTFTMINKEGKANYVKFHWKPTCGVKCLLEEEAIRIGGENHSHATQDLYESIAAGNYPEWKLYIQVMDPDHEDRFDFDPLDTTKIWPEELIPLQPVGRMVLNKNIDNFFAENEMLAMDPAHIVPGIYFSDDKMLQARVFAYADTHRHRLGPNYMLLPVNAPKCAHHNNSYDGYMNFVHRDEEVDYFPSKFDNTRNAERFPTPLRIVTGQRDKCVIEKENNFKQPGDRYRSWAPDRQDRFINRWVKALSEPRVTHEIRSTWISYLTQADRSLGQKVASRLNIRPTM.

Residues histidine 65 and asparagine 138 contribute to the active site. Tyrosine 348 serves as a coordination point for heme.

This sequence belongs to the catalase family. In terms of assembly, homotetramer. Heme is required as a cofactor.

Its subcellular location is the cytoplasm. The protein localises to the cytosol. The protein resides in the peroxisome matrix. It catalyses the reaction 2 H2O2 = O2 + 2 H2O. Its function is as follows. Catalyzes the degradation of hydrogen peroxide (H(2)O(2)) generated by peroxisomal oxidases to water and oxygen, thereby protecting cells from the toxic effects of hydrogen peroxide. The chain is Catalase from Ipomoea batatas (Sweet potato).